Here is a 563-residue protein sequence, read N- to C-terminus: Minor fimbrium subunit Mfa1 (563 aa).

Positions 1–19 (MKLNKMFLVGALLSLGFAS) are cleaved as a signal peptide. Cys-20 carries N-palmitoyl cysteine lipidation. Cys-20 is lipidated: S-diacylglycerol cysteine. Residues 20 to 49 (CSKEGNGPDPDNAAKSYMSMTLSMPMGSAR) constitute a propeptide that is removed on maturation. Residues 504–543 (LVPDPDPSNPENPNNPDPNPDEPGTPVPTDPENPLPDQDT) form a disordered region. The span at 505 to 537 (VPDPDPSNPENPNNPDPNPDEPGTPVPTDPENP) shows a compositional bias: pro residues.

This sequence belongs to the bacteroidetes fimbrillin superfamily. As to quaternary structure, structural component of the fimbrial stalk. Minor fimbriae are composed of a structural subunit, most often Mfa1, and the accessory subunits Mfa3, Mfa4 and Mfa5. Mfa1 interacts with Mfa2; this anchors the fimbrium in the membrane. Fimbrium assembly occurs by linear, head-to-tail oligomerization of fimbrial subunits. This is mediated via insertion of a C-terminal beta-strand from one subunit into a groove in the N-terminal domain of the following subunit. Interacts with S.gordonii ssp5.

It localises to the fimbrium. The protein resides in the cell outer membrane. Its function is as follows. Structural subunit of the minor fimbriae. These filamentous pili are attached to the cell surface; they mediate biofilm formation, adhesion onto host cells and onto other bacteria that are part of the oral microbiome. They play an important role in invasion of periodontal tissues and are recognized as major virulence factors. Mfa1 orthologs from different strains have highly divergent sequences, and this correlates with pathogenicity. The chain is Minor fimbrium subunit Mfa1 from Porphyromonas gingivalis (strain ATCC 33277 / DSM 20709 / CIP 103683 / JCM 12257 / NCTC 11834 / 2561).